The sequence spans 563 residues: MNTKELIASELASIIDSLDQEAILKLLETPKNSEMGDIAFPAFSLAKVERKAPQMIATELAEKMNSQAFEKVVATGPYVNFFLDKSAISAQVLQAVTTEKEHYADQNIGKQENVVIDMSSPNIAKPFSIGHLRSTVIGDSLSHIFQKIGYQTVKVNHLGDWGKQFGMLIVAYKKWGDEEAVKAHPIDELLKLYVRINAEAENDPSLDEEAREWFRKLENGDEEALALWQWFRDESLVEFNRLYNELKVEFDSYNGEAFYNDKMDAVVDILSEKGLLLESEGAQVVNLEKYGIEHPALIKKSDGATLYITRDLAAALYRKNEYQFAKSIYVVGQEQSAHFKQLKAVLQEMGYDWSDDITHVPFGLVTKEGKKLSTRKGNVILLEPTVAEAVSRAKVQIEAKNPELENKDQIAHAVGVGAIKFYDLKTDRTNGYDFDLEAMVSFEGETGPYVQYAYARIQSILRKADFKPETAGNYSLNDTESWEIIKLIQDFPRIINRAADNFEPSIIAKFAISLAQSFNKYYAHTRILDESPERDSRLALSYATAVVLKEALRLLGVEAPEKM.

The short motif at 121 to 131 (PNIAKPFSIGH) is the 'HIGH' region element.

Belongs to the class-I aminoacyl-tRNA synthetase family. In terms of assembly, monomer.

The protein resides in the cytoplasm. It carries out the reaction tRNA(Arg) + L-arginine + ATP = L-arginyl-tRNA(Arg) + AMP + diphosphate. The polypeptide is Arginine--tRNA ligase (Streptococcus pneumoniae serotype 19F (strain G54)).